The chain runs to 334 residues: GTP 3',8-cyclase (334 aa).

Positions 13-239 (KFHRKFYYLR…KVRSHHDGPA (227 aa)) constitute a Radical SAM core domain. Arg-22 is a GTP binding site. Positions 29 and 33 each coordinate [4Fe-4S] cluster. S-adenosyl-L-methionine is bound at residue Tyr-35. [4Fe-4S] cluster is bound at residue Cys-36. Arg-73 provides a ligand contact to GTP. Residue Gly-77 participates in S-adenosyl-L-methionine binding. Thr-104 serves as a coordination point for GTP. S-adenosyl-L-methionine is bound at residue Ser-128. A GTP-binding site is contributed by Lys-165. Met-199 lines the S-adenosyl-L-methionine pocket. The [4Fe-4S] cluster site is built by Cys-262 and Cys-265. Residue 267–269 (RLR) coordinates GTP. Cys-279 is a [4Fe-4S] cluster binding site.

This sequence belongs to the radical SAM superfamily. MoaA family. As to quaternary structure, monomer and homodimer. [4Fe-4S] cluster serves as cofactor.

It carries out the reaction GTP + AH2 + S-adenosyl-L-methionine = (8S)-3',8-cyclo-7,8-dihydroguanosine 5'-triphosphate + 5'-deoxyadenosine + L-methionine + A + H(+). The protein operates within cofactor biosynthesis; molybdopterin biosynthesis. In terms of biological role, catalyzes the cyclization of GTP to (8S)-3',8-cyclo-7,8-dihydroguanosine 5'-triphosphate. The protein is GTP 3',8-cyclase of Vibrio parahaemolyticus serotype O3:K6 (strain RIMD 2210633).